A 61-amino-acid chain; its full sequence is Conotoxin Am14.1 (61 aa).

Propeptides lie at residues 1 to 19 (MLSV…HLPR) and 52 to 61 (KRDLDLFTDQ).

Post-translationally, mostly non-hydroxylated. In terms of processing, contains 2 disulfide bonds. Expressed by the venom duct.

It localises to the secreted. In terms of biological role, probable toxin that inhibits ion channels. This chain is Conotoxin Am14.1, found in Conus amadis (Amadis cone).